A 1201-amino-acid polypeptide reads, in one-letter code: uncharacterized protein (1201 aa).

A helical transmembrane segment spans residues isoleucine 140–proline 160. 2 coiled-coil regions span residues glutamine 420 to asparagine 459 and alanine 536 to methionine 574.

Its subcellular location is the cell membrane. This is an uncharacterized protein from Bacillus subtilis (strain 168).